Consider the following 140-residue polypeptide: Active regulator of SIRT1 (140 aa).

2 disordered regions span residues 1–52 and 95–123; these read MSAS…KNKA and QQVL…EGTV. Positions 108 to 120 are enriched in basic and acidic residues; it reads DRPAEKKEKKKPE.

Belongs to the AROS family. As to quaternary structure, part of the small subunit (SSU) processome, composed of more than 70 proteins and the RNA chaperone small nucleolar RNA (snoRNA) U3.

The protein localises to the nucleus. It localises to the nucleolus. Functionally, part of the small subunit (SSU) processome, first precursor of the small eukaryotic ribosomal subunit. During the assembly of the SSU processome in the nucleolus, many ribosome biogenesis factors, an RNA chaperone and ribosomal proteins associate with the nascent pre-rRNA and work in concert to generate RNA folding, modifications, rearrangements and cleavage as well as targeted degradation of pre-ribosomal RNA by the RNA exosome. Acts as a chaperone that specifically mediates the integration of RPS19 in state post-A1. Direct regulator of SIRT1. The sequence is that of Active regulator of SIRT1 (RPS19BP1) from Gallus gallus (Chicken).